We begin with the raw amino-acid sequence, 634 residues long: Ras and EF-hand domain-containing protein homolog (634 aa).

EF-hand domains lie at 5 to 33 (DVEN…CPQL) and 33 to 68 (LDDN…TVQH). Residues Asp46, Asp48, Ser50, Lys52, and Glu57 each contribute to the Ca(2+) site. Residues 169-310 (LSEKKHENER…RADFDQKQDE (142 aa)) adopt a coiled-coil conformation. Disordered stretches follow at residues 216–237 (ERER…EMSE) and 308–328 (QDEL…SESV). GTP is bound by residues 449–454 (AVGKSS), 552–555 (NKVD), and 585–586 (AL). A propeptide spans 632–634 (RGS) (removed in mature form).

Belongs to the small GTPase superfamily. Rab family. In terms of assembly, homodimer.

Its subcellular location is the cytoplasm. The protein localises to the perinuclear region. Functionally, binds GTP and GDP. Plays a role in uterine seam cell development. In Caenorhabditis briggsae, this protein is Ras and EF-hand domain-containing protein homolog.